A 411-amino-acid chain; its full sequence is Dual-specificity RNA methyltransferase RlmN (411 aa).

E125 acts as the Proton acceptor in catalysis. A Radical SAM core domain is found at 131 to 380 (EEGRGTLCIS…IRTPRGRDIL (250 aa)). Residues C138 and C383 are joined by a disulfide bond. The [4Fe-4S] cluster site is built by C145, C149, and C152. S-adenosyl-L-methionine is bound by residues 209–210 (GE), S241, 263–265 (SLH), and N340. The S-methylcysteine intermediate role is filled by C383.

This sequence belongs to the radical SAM superfamily. RlmN family. Requires [4Fe-4S] cluster as cofactor.

The protein localises to the cytoplasm. The catalysed reaction is adenosine(2503) in 23S rRNA + 2 reduced [2Fe-2S]-[ferredoxin] + 2 S-adenosyl-L-methionine = 2-methyladenosine(2503) in 23S rRNA + 5'-deoxyadenosine + L-methionine + 2 oxidized [2Fe-2S]-[ferredoxin] + S-adenosyl-L-homocysteine. It catalyses the reaction adenosine(37) in tRNA + 2 reduced [2Fe-2S]-[ferredoxin] + 2 S-adenosyl-L-methionine = 2-methyladenosine(37) in tRNA + 5'-deoxyadenosine + L-methionine + 2 oxidized [2Fe-2S]-[ferredoxin] + S-adenosyl-L-homocysteine. In terms of biological role, specifically methylates position 2 of adenine 2503 in 23S rRNA and position 2 of adenine 37 in tRNAs. m2A2503 modification seems to play a crucial role in the proofreading step occurring at the peptidyl transferase center and thus would serve to optimize ribosomal fidelity. This is Dual-specificity RNA methyltransferase RlmN from Brucella suis biovar 1 (strain 1330).